Here is a 967-residue protein sequence, read N- to C-terminus: Glutamate receptor 2.6 (967 aa).

Residues 1 to 31 form the signal peptide; the sequence is MSLFNHLLSRALPLWLLFFINFLVLLGKSQQ. The Extracellular portion of the chain corresponds to 32–590; that stretch reads EVLQVQVGIV…WVFLKPLTRE (559 aa). 7 N-linked (GlcNAc...) asparagine glycosylation sites follow: asparagine 45, asparagine 57, asparagine 121, asparagine 336, asparagine 345, asparagine 424, and asparagine 550. The chain crosses the membrane as a helical span at residues 591–611; it reads LWFLTAASFLYIGIMVWIFEY. The Cytoplasmic segment spans residues 612-621; that stretch reads QASGDFRKQS. Residues 622–642 traverse the membrane as a helical segment; sequence IINKISNVFYFSFSTLFFAHM. Residues 643–651 lie on the Cytoplasmic side of the membrane; sequence RPSESIFTR. Residues 652–672 form a helical membrane-spanning segment; the sequence is VLVVVWCFVLLILTQSYTATL. The Extracellular segment spans residues 673–832; the sequence is TSMLTVQELR…DSPIRLDHHS (160 aa). Asparagine 795 is a glycosylation site (N-linked (GlcNAc...) asparagine). A helical transmembrane segment spans residues 833-853; the sequence is FEALFTIVFVVSMLLLLAMLV. Topologically, residues 854 to 967 are cytoplasmic; that stretch reads CRRYRQESKS…AALFSRIKSA (114 aa). The span at 864 to 874 shows a compositional bias: polar residues; the sequence is GEINANNSPTD. The disordered stretch occupies residues 864–913; sequence GEINANNSPTDGNMRAPPNQPTDDNMRAPTSPPIDDQVLEPPGPALNEAD.

It belongs to the glutamate-gated ion channel (TC 1.A.10.1) family. May form heteromers. In terms of tissue distribution, expressed predominantly in roots.

The protein resides in the membrane. Glutamate-gated receptor that probably acts as a non-selective cation channel. May be involved in light-signal transduction and calcium homeostasis via the regulation of calcium influx into cells. The protein is Glutamate receptor 2.6 (GLR2.6) of Arabidopsis thaliana (Mouse-ear cress).